The primary structure comprises 441 residues: Transcriptional regulatory protein ZraR (441 aa).

The Response regulatory domain maps to 7–121 (DILVVDDDVS…RLQETLEKAL (115 aa)). Asp56 bears the 4-aspartylphosphate mark. One can recognise a Sigma-54 factor interaction domain in the interval 141–370 (MIGSSPAMQH…LENAIERAVV (230 aa)). ATP contacts are provided by Gly172, Thr173, Arg329, and Arg359. The H-T-H motif DNA-binding region spans 421-440 (KTEAARQLGITRKTLLAKLS).

As to quaternary structure, forms homohexamers in the crystal structure. However, the dimerization interface between DNA-binding domains observed in the crystal structure suggests that dodecamers, rather than hexamers, might be the functionally important oligomer. Phosphorylated by ZraS.

The protein resides in the cytoplasm. Its activity is regulated as follows. Activity of the ZraS/ZraR two-component system is repressed by the zinc-bound form of ZraP, which probably interacts with the periplasmic region of ZraS. Functionally, part of the Zra signaling pathway, an envelope stress response (ESR) system composed of the periplasmic accessory protein ZraP, the histidine kinase ZraS and the transcriptional regulator ZraR. The ZraPSR system contributes to antibiotic resistance and is important for membrane integrity in the presence of membrane-targeting biocides. ZraR is a member of the two-component regulatory system ZraS/ZraR. When activated by ZraS, acts in conjunction with sigma-54 to regulate the expression of zraP in the presence of high Zn(2+) or Pb(2+) concentrations. Also positively autoregulates the expression of the zraSR operon. The protein is Transcriptional regulatory protein ZraR of Salmonella typhimurium (strain LT2 / SGSC1412 / ATCC 700720).